The primary structure comprises 670 residues: Probable beta-glucosidase N (670 aa).

The first 21 residues, 1-21, serve as a signal peptide directing secretion; that stretch reads MHSNILPVLTSVATLLGLVQG. Asn51 carries an N-linked (GlcNAc...) asparagine glycan. The tract at residues 65–87 is disordered; that stretch reads FEPSDGVRSVQGSGKDYDNPAMR. The N-linked (GlcNAc...) asparagine glycan is linked to Asn141. The active site involves Asp152. Asn184, Asn248, Asn330, and Asn417 each carry an N-linked (GlcNAc...) asparagine glycan.

This sequence belongs to the glycosyl hydrolase 3 family.

It localises to the secreted. The enzyme catalyses Hydrolysis of terminal, non-reducing beta-D-glucosyl residues with release of beta-D-glucose.. Its pathway is glycan metabolism; cellulose degradation. Functionally, beta-glucosidases are one of a number of cellulolytic enzymes involved in the degradation of cellulosic biomass. Catalyzes the last step releasing glucose from the inhibitory cellobiose. This chain is Probable beta-glucosidase N (bglN), found in Emericella nidulans (strain FGSC A4 / ATCC 38163 / CBS 112.46 / NRRL 194 / M139) (Aspergillus nidulans).